A 226-amino-acid polypeptide reads, in one-letter code: Cytidylate kinase (226 aa).

10–18 is a binding site for ATP; it reads GFSSTGKST.

Belongs to the cytidylate kinase family. Type 1 subfamily.

The protein localises to the cytoplasm. The catalysed reaction is CMP + ATP = CDP + ADP. It catalyses the reaction dCMP + ATP = dCDP + ADP. The polypeptide is Cytidylate kinase (Flavobacterium psychrophilum (strain ATCC 49511 / DSM 21280 / CIP 103535 / JIP02/86)).